The following is a 310-amino-acid chain: MNNVILQELKNIVSTERVTCNEPLSKHTSFKIGGPADYFVITKKIEETAAVIQCCNQHNLPLLMIGKGSNLLISDAGIRGVVLKQEDNTEGFFVTQCEEGYLVTGGAGMNLSAFAMKIANESLTGFEFAAGIPGSLGGAVYMNAGAYGGEIKDCIKSARVLTKEGQILSLNREELELSYRSSIIQKKGYYVIDATFLLQKGNQEDILRKIEELNQARKDKQPLEYPSAGSTFKRPEGYFAGKLIMDAGLRGYRVGGAMVSEKHCGFVINTGDATAKDVLQLIDDVRRIVKEKFGVTLEPEVRLIGEKVNP.

Residues 31–216 (KIGGPADYFV…LRKIEELNQA (186 aa)) enclose the FAD-binding PCMH-type domain. The active site involves Arg-180. Ser-230 serves as the catalytic Proton donor. Residue Glu-300 is part of the active site.

It belongs to the MurB family. It depends on FAD as a cofactor.

The protein resides in the cytoplasm. It catalyses the reaction UDP-N-acetyl-alpha-D-muramate + NADP(+) = UDP-N-acetyl-3-O-(1-carboxyvinyl)-alpha-D-glucosamine + NADPH + H(+). It functions in the pathway cell wall biogenesis; peptidoglycan biosynthesis. Cell wall formation. The sequence is that of UDP-N-acetylenolpyruvoylglucosamine reductase from Lachnoclostridium phytofermentans (strain ATCC 700394 / DSM 18823 / ISDg) (Clostridium phytofermentans).